Reading from the N-terminus, the 368-residue chain is MITVDVDLGDRAYPIHIGSGLLSKAELFAPHIRGARAVIVTNETVAPLYAAKVEEAIRSLGKAVDTVVLPDGESFKKWDTLNRIFDALLTAGADRKTTLIALGGGVIGDMTGFAAACYMRGVPFIQVPTTLLSQVDSSVGGKTGINHPLGKNMIGAFHQPQAVLADIDTLRTLPARELAAGMAEVIKHGAIADADYFAWIEQNIRGLNDCDTDLMTEAVRGSVRIKAAVVAQDERETGLRATLNFGHTFGHAIEAGLGYGEWLHGEAVGCGMVMAADLSHRLGFIDIDTRNRITALTCAADLPTVAPALGVDRFIELMRVDKKAEAGEIKFVLLRKLGQAFVTTVPDADLRATLLHAVLRPPTEAPVA.

Residues 71–76 (DGESFK), 105–109 (GVIGD), 129–130 (TT), Lys-142, Lys-151, and 169–172 (TLRT) each bind NAD(+). Residues Glu-184, His-247, and His-264 each contribute to the Zn(2+) site.

This sequence belongs to the sugar phosphate cyclases superfamily. Dehydroquinate synthase family. It depends on Co(2+) as a cofactor. The cofactor is Zn(2+). NAD(+) is required as a cofactor.

Its subcellular location is the cytoplasm. It catalyses the reaction 7-phospho-2-dehydro-3-deoxy-D-arabino-heptonate = 3-dehydroquinate + phosphate. It participates in metabolic intermediate biosynthesis; chorismate biosynthesis; chorismate from D-erythrose 4-phosphate and phosphoenolpyruvate: step 2/7. In terms of biological role, catalyzes the conversion of 3-deoxy-D-arabino-heptulosonate 7-phosphate (DAHP) to dehydroquinate (DHQ). This Ralstonia pickettii (strain 12J) protein is 3-dehydroquinate synthase.